A 319-amino-acid chain; its full sequence is Acetyl-coenzyme A carboxylase carboxyl transferase subunit alpha (319 aa).

Residues 35 to 296 (NIDEEVHRLR…KAQLLADLAD (262 aa)) enclose the CoA carboxyltransferase C-terminal domain.

Belongs to the AccA family. In terms of assembly, acetyl-CoA carboxylase is a heterohexamer composed of biotin carboxyl carrier protein (AccB), biotin carboxylase (AccC) and two subunits each of ACCase subunit alpha (AccA) and ACCase subunit beta (AccD).

It localises to the cytoplasm. It carries out the reaction N(6)-carboxybiotinyl-L-lysyl-[protein] + acetyl-CoA = N(6)-biotinyl-L-lysyl-[protein] + malonyl-CoA. It functions in the pathway lipid metabolism; malonyl-CoA biosynthesis; malonyl-CoA from acetyl-CoA: step 1/1. Its function is as follows. Component of the acetyl coenzyme A carboxylase (ACC) complex. First, biotin carboxylase catalyzes the carboxylation of biotin on its carrier protein (BCCP) and then the CO(2) group is transferred by the carboxyltransferase to acetyl-CoA to form malonyl-CoA. The polypeptide is Acetyl-coenzyme A carboxylase carboxyl transferase subunit alpha (Escherichia coli O127:H6 (strain E2348/69 / EPEC)).